A 61-amino-acid chain; its full sequence is Small ribosomal subunit protein uS14 (61 aa).

Zn(2+) contacts are provided by cysteine 24, cysteine 27, cysteine 40, and cysteine 43.

This sequence belongs to the universal ribosomal protein uS14 family. Zinc-binding uS14 subfamily. Part of the 30S ribosomal subunit. Contacts proteins S3 and S10. Zn(2+) is required as a cofactor.

Functionally, binds 16S rRNA, required for the assembly of 30S particles and may also be responsible for determining the conformation of the 16S rRNA at the A site. The protein is Small ribosomal subunit protein uS14 of Treponema denticola (strain ATCC 35405 / DSM 14222 / CIP 103919 / JCM 8153 / KCTC 15104).